The primary structure comprises 374 residues: Putative F-box protein At5g60060 (374 aa).

The 53-residue stretch at 9–61 folds into the F-box domain; it reads SQWSDLPLDILELISDRLDHDSSDTIHLLCLRSVCATWRLSLPLSNKNNRLSK.

This Arabidopsis thaliana (Mouse-ear cress) protein is Putative F-box protein At5g60060.